The following is a 306-amino-acid chain: Aspartate carbamoyltransferase catalytic subunit (306 aa).

Carbamoyl phosphate contacts are provided by R55 and T56. K84 contributes to the L-aspartate binding site. R105, H133, and Q136 together coordinate carbamoyl phosphate. Positions 166 and 227 each coordinate L-aspartate. Carbamoyl phosphate-binding residues include L265 and P266.

This sequence belongs to the aspartate/ornithine carbamoyltransferase superfamily. ATCase family. In terms of assembly, heterododecamer (2C3:3R2) of six catalytic PyrB chains organized as two trimers (C3), and six regulatory PyrI chains organized as three dimers (R2).

The catalysed reaction is carbamoyl phosphate + L-aspartate = N-carbamoyl-L-aspartate + phosphate + H(+). Its pathway is pyrimidine metabolism; UMP biosynthesis via de novo pathway; (S)-dihydroorotate from bicarbonate: step 2/3. Its function is as follows. Catalyzes the condensation of carbamoyl phosphate and aspartate to form carbamoyl aspartate and inorganic phosphate, the committed step in the de novo pyrimidine nucleotide biosynthesis pathway. The sequence is that of Aspartate carbamoyltransferase catalytic subunit from Aeromonas hydrophila subsp. hydrophila (strain ATCC 7966 / DSM 30187 / BCRC 13018 / CCUG 14551 / JCM 1027 / KCTC 2358 / NCIMB 9240 / NCTC 8049).